We begin with the raw amino-acid sequence, 197 residues long: MSLSIDVTSLPSISSSIFKNESSSTTSTLSGKSIGRNEQYVSSDIEAFNKYMLSKSPEDIGPSDSASNNPLTSFSIRSNAVKTNADAGVSMDSSTQSRPSSNVGCDQMDFSLTKGINVSASLDSCVSISTNHKKEKSKKDKSRKHYPRIEADSDYEDYVLDDSDSDDGKCKNCKYKKKYFALRMRMKQVAMQLIEDL.

A compositionally biased stretch (low complexity) spans 17 to 30 (IFKNESSSTTSTLS). Residues 17 to 36 (IFKNESSSTTSTLSGKSIGR) are disordered. Position 92 (aspartate 92) interacts with Mg(2+).

The protein belongs to the rotavirus NSP5 family. As to quaternary structure, homodimer. Interacts with VP1. Interacts with VP2. Interacts with NSP2; this interaction leads to up-regulation of NSP5 hyperphosphorylation and formation of virus factories. Interacts with NSP6. Participates in the selective exclusion of host proteins from stress granules (SG) and P bodies (PB). Also participates in the sequestration of these remodeled organelles in viral factories. It depends on Mg(2+) as a cofactor. In terms of processing, O-glycosylated.

Its subcellular location is the host cytoplasm. In terms of biological role, plays an essential role in the viral genome replication. Participates, together with NSP2, in the formation of viral factories (viroplasms), which are large inclusions in the host cytoplasm where replication intermediates are assembled and viral RNA replication takes place. Orchestrates the recruitment of viroplasmic proteins such as capsid proteins to these factories. Participates in the selective exclusion of host proteins from stress granules (SG) and P bodies (PB). Also participates in the sequestration of these remodeled organelles in viral factories. The sequence is that of Non-structural protein 5 from Homo sapiens (Human).